A 347-amino-acid chain; its full sequence is Quinolinate synthase (347 aa).

Residues His47 and Ser68 each coordinate iminosuccinate. A [4Fe-4S] cluster-binding site is contributed by Cys113. Iminosuccinate contacts are provided by residues 139 to 141 (YAN) and Ser156. Residue Cys200 coordinates [4Fe-4S] cluster. Iminosuccinate-binding positions include 226–228 (HPE) and Thr243. Residue Cys297 participates in [4Fe-4S] cluster binding.

The protein belongs to the quinolinate synthase family. Type 1 subfamily. [4Fe-4S] cluster is required as a cofactor.

It localises to the cytoplasm. The enzyme catalyses iminosuccinate + dihydroxyacetone phosphate = quinolinate + phosphate + 2 H2O + H(+). It participates in cofactor biosynthesis; NAD(+) biosynthesis; quinolinate from iminoaspartate: step 1/1. Catalyzes the condensation of iminoaspartate with dihydroxyacetone phosphate to form quinolinate. The chain is Quinolinate synthase from Salmonella heidelberg (strain SL476).